Here is a 507-residue protein sequence, read N- to C-terminus: MEALWTLTLALAAGLAAASPPNILLIFADDLGYGDLGSYGHPSSTTPNLDQLAAGGLRFTDFYVPVSLCTPSRAALLTGRLPVRMGLYPGVLEPSSRGGLPLDEVTLAEVLAAQGYLTGIAGKWHLGVGPEGAFLPPHHGFHRFLGIPYSHDQGPCQNLTCFPPATPCEGICDQGLVPIPLLANLSVEAQPPWLPGLEARYVAFARDLMTDAQHQGRPFFLYYASHHTHYPQFSGQSFPGHSGRGPFGDSLMELDAAVGALMTAVGDLGLLGETLVFFTADNGPETMRMSHGGCSGLLRCGKGTTFEGGVREPALAFWPGHIAPGVTHELASSLDLLPTLAALAGAQLPNITLDGVDLSPLLLGTGKSPRHTLFFYSAYPDEVRGVFAVRSGKYKAHFFTQGSVHSDTTADPACHASNPLTAHEPPLLFDLSEDPGENYNLLDSVDEVAPEALQAVKQLELLKAQFDAAMTFGPSQMAQGEDPTLQVCCQPSCTPRPSCCHCPEFQP.

The N-terminal stretch at 1-18 (MEALWTLTLALAAGLAAA) is a signal peptide. Residues Asp29, Asp30, and Cys69 each contribute to the Ca(2+) site. The active-site Nucleophile is the Cys69. A 3-oxoalanine (Cys) modification is found at Cys69. Lys123 serves as a coordination point for substrate. His125 is a catalytic residue. Residue Ser150 coordinates substrate. Disulfide bonds link Cys156–Cys172 and Cys161–Cys168. Asn158 is a glycosylation site (N-linked (GlcNAc...) asparagine). An N-linked (GlcNAc...) asparagine glycan is attached at Asn184. His229 is a substrate binding site. 2 residues coordinate Ca(2+): Asp281 and Asn282. Disulfide bonds link Cys300–Cys414, Cys488–Cys500, Cys489–Cys502, and Cys493–Cys499. Lys302 lines the substrate pocket. Residue Asn350 is glycosylated (N-linked (GlcNAc...) asparagine).

It belongs to the sulfatase family. Homodimer at neutral pH and homooctamer at acidic pH. Exists both as a single chain of 58 kDa (component A) or as a chain of 50 kDa (component B) linked by disulfide bond(s) to a 7 kDa chain (component C). Interacts with SUMF1. It depends on Ca(2+) as a cofactor. Post-translationally, the conversion to 3-oxoalanine (also known as C-formylglycine, FGly), of a serine or cysteine residue in prokaryotes and of a cysteine residue in eukaryotes, is critical for catalytic activity. This post-translational modification is severely defective in multiple sulfatase deficiency (MSD).

It localises to the endoplasmic reticulum. The protein localises to the lysosome. The enzyme catalyses an N-acyl-1-beta-D-(3-O-sulfo)-galactosyl-sphing-4-enine + H2O = a beta-D-galactosyl-(1&lt;-&gt;1')-N-acylsphing-4-enine + sulfate + H(+). Functionally, hydrolyzes cerebroside sulfate. The protein is Arylsulfatase A (ARSA) of Bos taurus (Bovine).